The chain runs to 302 residues: Putative S-adenosyl-L-methionine-dependent methyltransferase MAV_2803 (302 aa).

Residues aspartate 129 and 158–159 (DL) contribute to the S-adenosyl-L-methionine site.

The protein belongs to the UPF0677 family.

Functionally, exhibits S-adenosyl-L-methionine-dependent methyltransferase activity. The polypeptide is Putative S-adenosyl-L-methionine-dependent methyltransferase MAV_2803 (Mycobacterium avium (strain 104)).